Reading from the N-terminus, the 647-residue chain is RalBP1-associated Eps domain-containing protein 2 (647 aa).

One can recognise an EH 1 domain in the interval 21–122 (EQQCYSELFA…RTESIKCELP (102 aa)). A disordered region spans residues 156-233 (EKNSFKRMDN…PSSEGPGAKP (78 aa)). Basic and acidic residues predominate over residues 158 to 170 (NSFKRMDNEDKQE). The span at 221–230 (PEGPSSEGPG) shows a compositional bias: low complexity. A Phosphoserine modification is found at Ser239. An EH 2 domain is found at 268–359 (QREYYVNQFR…LQPEYLQAAF (92 aa)). In terms of domain architecture, EF-hand spans 301–336 (LSIPELSYIWELSDADCDGALTLSEFCAAFHLIVAR). Ca(2+)-binding residues include Asp314, Asp316, Asp318, and Glu325. A disordered region spans residues 402-478 (PTQDVTTADD…PRPQKTHSRA (77 aa)). A Phosphothreonine modification is found at Thr466. Ser480 is subject to Phosphoserine. Positions 492 to 568 (PAANSGLLPP…PENQTTESQE (77 aa)) are disordered. Pro residues predominate over residues 499 to 510 (LPPPPALPPRPC). Residues 501–647 (PPPALPPRPC…LEQLRPVTVL (147 aa)) form an interaction with RALBP1 region. Residues 524-539 (SQLNRAPSQAAESSPT) show a composition bias toward polar residues. Positions 548–647 (PPSKPIRRKF…LEQLRPVTVL (100 aa)) are interaction with ASAP1. A coiled-coil region spans residues 599 to 640 (IQTAIRKNKEANAVLARLNSELQQQLKEVHQERIALENQLEQ).

Interacts with EPN1. Interacts with EPS15 AND EPS15L1. Interacts with RALBP1; can form a ternary complex with activated Ral (RALA or RALB). Interacts with ASAP1; the interaction is direct and this complex can bind paxillin. Also forms a ternary complex with RALBP1 and ASAP1. Interacts with GRB2. In terms of processing, tyrosine-phosphorylated upon stimulation of cells with EGF. Phosphorylation on Tyr-residues induces its association with the EGF receptor probably indirectly through an adapter like GRB2.

The protein localises to the cytoplasm. Involved in ligand-dependent receptor mediated endocytosis of the EGF and insulin receptors as part of the Ral signaling pathway. By controlling growth factor receptors endocytosis may regulate cell survival. Through ASAP1 may regulate cell adhesion and migration. This Mus musculus (Mouse) protein is RalBP1-associated Eps domain-containing protein 2 (Reps2).